The sequence spans 321 residues: uncharacterized protein (321 aa).

Tyr-60 functions as the Proton donor in the catalytic mechanism. His-118 contacts substrate.

It belongs to the aldo/keto reductase family.

This is an uncharacterized protein from Schizosaccharomyces pombe (strain 972 / ATCC 24843) (Fission yeast).